The sequence spans 212 residues: Large ribosomal subunit protein uL3 (212 aa).

It belongs to the universal ribosomal protein uL3 family. In terms of assembly, part of the 50S ribosomal subunit. Forms a cluster with proteins L14 and L19.

One of the primary rRNA binding proteins, it binds directly near the 3'-end of the 23S rRNA, where it nucleates assembly of the 50S subunit. The protein is Large ribosomal subunit protein uL3 of Acetivibrio thermocellus (strain ATCC 27405 / DSM 1237 / JCM 9322 / NBRC 103400 / NCIMB 10682 / NRRL B-4536 / VPI 7372) (Clostridium thermocellum).